We begin with the raw amino-acid sequence, 474 residues long: Glutamate--tRNA ligase 1 (474 aa).

Residues 10-20 (PSPTGFLHIGG) carry the 'HIGH' region motif. Residues 239 to 243 (KLSKR) carry the 'KMSKS' region motif. K242 lines the ATP pocket.

It belongs to the class-I aminoacyl-tRNA synthetase family. Glutamate--tRNA ligase type 1 subfamily. In terms of assembly, monomer.

It is found in the cytoplasm. It catalyses the reaction tRNA(Glu) + L-glutamate + ATP = L-glutamyl-tRNA(Glu) + AMP + diphosphate. Catalyzes the attachment of glutamate to tRNA(Glu) in a two-step reaction: glutamate is first activated by ATP to form Glu-AMP and then transferred to the acceptor end of tRNA(Glu). The chain is Glutamate--tRNA ligase 1 from Methylobacterium sp. (strain 4-46).